The following is a 118-amino-acid chain: Holo-[acyl-carrier-protein] synthase (118 aa).

Mg(2+) contacts are provided by Asp8 and Glu58.

This sequence belongs to the P-Pant transferase superfamily. AcpS family. Requires Mg(2+) as cofactor.

The protein resides in the cytoplasm. The catalysed reaction is apo-[ACP] + CoA = holo-[ACP] + adenosine 3',5'-bisphosphate + H(+). Functionally, transfers the 4'-phosphopantetheine moiety from coenzyme A to a Ser of acyl-carrier-protein. The protein is Holo-[acyl-carrier-protein] synthase of Listeria innocua serovar 6a (strain ATCC BAA-680 / CLIP 11262).